A 222-amino-acid polypeptide reads, in one-letter code: Putative RING finger protein ORF118 (222 aa).

The RING-type zinc finger occupies 78-114 (CCICMAKNNRKEALPCQHNVCRDCYYKPMRNNCPVCN). The disordered stretch occupies residues 184-222 (IENRIHNNNNNNYDENNPDDLPVIHPPRRRHRQTAHISI). Residues 189-198 (HNNNNNNYDE) show a composition bias toward low complexity. Residues 209–222 (PPRRRHRQTAHISI) are compositionally biased toward basic residues.

This Magallana gigas (Pacific oyster) protein is Putative RING finger protein ORF118.